We begin with the raw amino-acid sequence, 534 residues long: Protein FAM83D (534 aa).

2 disordered regions span residues 320-372 (TPPS…STLG) and 501-534 (GLNR…RGLQ). Polar residues predominate over residues 329 to 342 (TKPQAERLTSTPAR). Positions 350–362 (RMNKDIEEPDRKS) are enriched in basic and acidic residues. Positions 511–520 (EARQPNTNID) are enriched in polar residues.

The protein belongs to the FAM83 family.

Its subcellular location is the cytoplasm. The protein localises to the cytoskeleton. It localises to the spindle. The protein resides in the spindle pole. Functionally, may regulate cell proliferation, growth, migration and epithelial to mesenchymal transition. May also be important for proper chromosome congression and alignment during mitosis. The sequence is that of Protein FAM83D from Danio rerio (Zebrafish).